A 346-amino-acid polypeptide reads, in one-letter code: Phosphoribosylformylglycinamidine cyclo-ligase (346 aa).

This sequence belongs to the AIR synthase family.

It is found in the cytoplasm. The enzyme catalyses 2-formamido-N(1)-(5-O-phospho-beta-D-ribosyl)acetamidine + ATP = 5-amino-1-(5-phospho-beta-D-ribosyl)imidazole + ADP + phosphate + H(+). It functions in the pathway purine metabolism; IMP biosynthesis via de novo pathway; 5-amino-1-(5-phospho-D-ribosyl)imidazole from N(2)-formyl-N(1)-(5-phospho-D-ribosyl)glycinamide: step 2/2. This chain is Phosphoribosylformylglycinamidine cyclo-ligase, found in Geobacillus sp. (strain WCH70).